Here is a 324-residue protein sequence, read N- to C-terminus: Adenosine kinase (324 aa).

Substrate is bound by residues Ser8, Asp12, Ser36, Gly48, Asn52, Phe102, Phe116, and 172–173 (QQ). ATP-binding positions include Asn195, 223 to 228 (TLGPKG), and Gly256. Residue Asp257 participates in substrate binding. The active-site Proton acceptor is the Asp257.

This sequence belongs to the carbohydrate kinase PfkB family. Homodimer. Requires Mg(2+) as cofactor.

It carries out the reaction adenosine + ATP = AMP + ADP + H(+). The catalysed reaction is adenosine + GTP = GDP + AMP + H(+). The enzyme catalyses dGTP + adenosine = dGDP + AMP + H(+). Its pathway is purine metabolism; AMP biosynthesis via salvage pathway; AMP from adenosine: step 1/1. Functionally, catalyzes the phosphorylation of adenosine to adenosine monophosphate (AMP). Prefers dGTP and GTP to ATP as phosphate donors in vitro. The protein is Adenosine kinase (adoK) of Mycobacterium bovis (strain ATCC BAA-935 / AF2122/97).